Consider the following 157-residue polypeptide: Transcriptional repressor NrdR (157 aa).

The segment at 3 to 34 (CPFCNTVDTKVIDSRLVSEGSQIKRRRQCAIC) is a zinc-finger region. The region spanning 49–139 (PRVIKNDDLL…VYRSFEDVRE (91 aa)) is the ATP-cone domain.

This sequence belongs to the NrdR family. Zn(2+) serves as cofactor.

Its function is as follows. Negatively regulates transcription of bacterial ribonucleotide reductase nrd genes and operons by binding to NrdR-boxes. The protein is Transcriptional repressor NrdR of Hamiltonella defensa subsp. Acyrthosiphon pisum (strain 5AT).